The primary structure comprises 485 residues: Glutamyl-tRNA(Gln) amidotransferase subunit A (485 aa).

Active-site charge relay system residues include lysine 78 and serine 153. The Acyl-ester intermediate role is filled by serine 177.

It belongs to the amidase family. GatA subfamily. As to quaternary structure, heterotrimer of A, B and C subunits.

It catalyses the reaction L-glutamyl-tRNA(Gln) + L-glutamine + ATP + H2O = L-glutaminyl-tRNA(Gln) + L-glutamate + ADP + phosphate + H(+). Its function is as follows. Allows the formation of correctly charged Gln-tRNA(Gln) through the transamidation of misacylated Glu-tRNA(Gln) in organisms which lack glutaminyl-tRNA synthetase. The reaction takes place in the presence of glutamine and ATP through an activated gamma-phospho-Glu-tRNA(Gln). The protein is Glutamyl-tRNA(Gln) amidotransferase subunit A of Desulfotalea psychrophila (strain LSv54 / DSM 12343).